The primary structure comprises 144 residues: Large ribosomal subunit protein uL15 (144 aa).

The disordered stretch occupies residues Met-1 to Gly-52. A compositionally biased stretch (gly residues) spans Arg-21–Gly-31.

The protein belongs to the universal ribosomal protein uL15 family. In terms of assembly, part of the 50S ribosomal subunit.

Functionally, binds to the 23S rRNA. This is Large ribosomal subunit protein uL15 from Haemophilus influenzae (strain 86-028NP).